Consider the following 454-residue polypeptide: Nuclear envelope integral membrane protein (454 aa).

Positions 1–18 are cleaved as a signal peptide; it reads MHSAGLLMLTVAGYFTSG. N-linked (GlcNAc...) asparagine glycosylation is present at asparagine 38. A run of 5 helical transmembrane segments spans residues 138–158, 166–186, 197–217, 231–251, and 280–300; these read IPLD…LFSA, VFYY…VVIY, MMYG…KQLA, VLGY…RIGP, and TSAV…PISW. The span at 388–405 shows a compositional bias: acidic residues; sequence SMDAAPEEESVEEPEEDK. Residues 388-454 are disordered; it reads SMDAAPEEES…QEVDLRQVVQ (67 aa). Over residues 414–424 the composition is skewed to polar residues; that stretch reads NSQFRYQQAAR. A compositionally biased stretch (acidic residues) spans 428–446; the sequence is PEPESESDDSEEEEFFEQE.

This sequence belongs to the NEMP family. In terms of assembly, interacts with OTE. Expressed in both germline and somatic cells in the larval testis and prepupal ovary (at protein level). Also detected in the larval eye and larval wing disk (at protein level).

The protein localises to the nucleus inner membrane. In terms of biological role, contributes to nuclear envelope stiffness in germ cells. Required for male and female fertility. The chain is Nuclear envelope integral membrane protein from Drosophila melanogaster (Fruit fly).